Reading from the N-terminus, the 181-residue chain is Deoxyuridine 5'-triphosphate nucleotidohydrolase (181 aa).

Substrate-binding positions include 96-98 (RSG), N109, 113-115 (TVD), and K123.

The protein belongs to the dUTPase family. Mg(2+) is required as a cofactor.

It catalyses the reaction dUTP + H2O = dUMP + diphosphate + H(+). It participates in pyrimidine metabolism; dUMP biosynthesis; dUMP from dCTP (dUTP route): step 2/2. Functionally, this enzyme is involved in nucleotide metabolism: it produces dUMP, the immediate precursor of thymidine nucleotides and it decreases the intracellular concentration of dUTP so that uracil cannot be incorporated into DNA. The sequence is that of Deoxyuridine 5'-triphosphate nucleotidohydrolase from Corynebacterium efficiens (strain DSM 44549 / YS-314 / AJ 12310 / JCM 11189 / NBRC 100395).